Reading from the N-terminus, the 325-residue chain is E3 ubiquitin-protein ligase SIAH2 (325 aa).

A compositionally biased stretch (polar residues) spans 1–15 (MSRPSSTGPSANKPC). The disordered stretch occupies residues 1–43 (MSRPSSTGPSANKPCSKQPPPPQTPHAPSPAAPPAAATISAAG). Serine 6 is subject to Phosphoserine. A Phosphoserine; by DYRK2 modification is found at serine 16. The span at 17–33 (KQPPPPQTPHAPSPAAP) shows a compositional bias: pro residues. Phosphothreonine; by MAPK14 is present on threonine 24. Phosphoserine; by DYRK2 and MAPK14 is present on serine 29. Over residues 34–43 (PAAATISAAG) the composition is skewed to low complexity. Phosphoserine; by DYRK2 is present on serine 69. The RING-type zinc finger occupies 81 to 116 (CPVCFDYVLPPILQCQAGHLVCNQCRQKLSCCPTCR). Position 120 is a phosphothreonine; by DYRK2 (threonine 120). An SBD region spans residues 131–323 (VASAVLFPCK…LGINVTISTC (193 aa)). An SIAH-type zinc finger spans residues 134–194 (AVLFPCKYAT…VMSHLMHAHK (61 aa)). Cysteine 139, cysteine 146, histidine 158, cysteine 162, cysteine 169, cysteine 176, histidine 188, and histidine 193 together coordinate Zn(2+).

The protein belongs to the SINA (Seven in absentia) family. In terms of assembly, homodimer. Interacts with UBE2E2. Interacts with VAV1, without mediating its ubiquitin-mediated degradation. Interacts with CACYBP/SIP. Probable component of some large E3 complex possibly composed of UBE2D1, SIAH2, CACYBP/SIP, SKP1, APC and TBL1X. Interacts with UBE2I. Interacts with PEG10, which may inhibit its activity. Interacts with EGLN2 and SNCAIP. Interacts with DYRK2. Interacts with PEG3. Interacts with NR1D1 and NR1D2. Interacts with DCC. Interacts with AXIN1. Phosphorylated at Ser-29 by DYRK2; this increases the ubiquitin ligase activity and promotes degradation of EGLN3. Phosphorylated at Thr-24 and Ser-29 by MAPK14, which mediates the degradation by the proteasome of EGLN3. In terms of tissue distribution, widely expressed at low level in embryos and adults. Expressed in a specific population of germ cells within both the mouse ovary and testis. Absent in primordial oocytes but expressed in all growing oocytes, coincident with their recruitment from the pool of quiescent cells. Its level of expression increases as the oocytes mature. Expressed in Graafian follicles and in fertilized zygotes up until the two cell stage, a time of extensive maternal transcript degradation and zygotic gene activation. Expressed in the testis from postmeiotic spermatids.

Its subcellular location is the cytoplasm. The protein localises to the nucleus. It carries out the reaction S-ubiquitinyl-[E2 ubiquitin-conjugating enzyme]-L-cysteine + [acceptor protein]-L-lysine = [E2 ubiquitin-conjugating enzyme]-L-cysteine + N(6)-ubiquitinyl-[acceptor protein]-L-lysine.. Its pathway is protein modification; protein ubiquitination. In terms of biological role, E3 ubiquitin-protein ligase that mediates ubiquitination and subsequent proteasomal degradation of target proteins. E3 ubiquitin ligases accept ubiquitin from an E2 ubiquitin-conjugating enzyme in the form of a thioester and then directly transfers the ubiquitin to targeted substrates. Mediates E3 ubiquitin ligase activity either through direct binding to substrates or by functioning as the essential RING domain subunit of larger E3 complexes. Mediates ubiquitination and proteasomal degradation of DYRK2 in response to hypoxia. Promotes monoubiquitination of SNCA. Triggers the ubiquitin-mediated degradation of many substrates, including proteins involved in transcription regulation (GPS2, POU2AF1, PML, NCOR1), a cell surface receptor (DCC), an antiapoptotic protein (BAG1), and a protein involved in synaptic vesicle function in neurons (SYP). It is thereby involved in apoptosis, tumor suppression, cell cycle, transcription and signaling processes. Has some overlapping function with SIAH1. Triggers the ubiquitin-mediated degradation of TRAF2, whereas SIAH1 does not. Regulates cellular clock function via ubiquitination of the circadian transcriptional repressors NR1D1 and NR1D2 leading to their proteasomal degradation. Plays an important role in mediating the rhythmic degradation/clearance of NR1D1 and NR1D2 contributing to their circadian profile of protein abundance. Mediates ubiquitination and degradation of EGLN2 and EGLN3 in response to the unfolded protein response (UPR), leading to their degradation and subsequent stabilization of ATF4. Also part of the Wnt signaling pathway in which it mediates the Wnt-induced ubiquitin-mediated proteasomal degradation of AXIN1. This chain is E3 ubiquitin-protein ligase SIAH2 (Siah2), found in Mus musculus (Mouse).